An 82-amino-acid chain; its full sequence is Small ribosomal subunit protein bS20 (82 aa).

The protein belongs to the bacterial ribosomal protein bS20 family.

Its function is as follows. Binds directly to 16S ribosomal RNA. This Streptococcus suis (strain 98HAH33) protein is Small ribosomal subunit protein bS20.